Consider the following 472-residue polypeptide: Pyruvate kinase (472 aa).

Residue arginine 33 participates in substrate binding. The K(+) site is built by asparagine 35, serine 37, and aspartate 67. Asparagine 35 to histidine 38 is an ATP binding site. ATP-binding residues include arginine 74 and lysine 155. Glutamate 220 is a Mg(2+) binding site. Substrate-binding residues include glycine 243, aspartate 244, and threonine 276. Aspartate 244 lines the Mg(2+) pocket.

The protein belongs to the pyruvate kinase family. As to quaternary structure, homotetramer. It depends on Mg(2+) as a cofactor. The cofactor is K(+).

It catalyses the reaction pyruvate + ATP = phosphoenolpyruvate + ADP + H(+). It participates in carbohydrate degradation; glycolysis; pyruvate from D-glyceraldehyde 3-phosphate: step 5/5. The sequence is that of Pyruvate kinase (pyk) from Mycobacterium tuberculosis (strain CDC 1551 / Oshkosh).